Reading from the N-terminus, the 637-residue chain is 1-deoxy-D-xylulose-5-phosphate synthase (637 aa).

Residues His-88 and 129 to 131 (GHS) contribute to the thiamine diphosphate site. Asp-160 provides a ligand contact to Mg(2+). Residues 161 to 162 (GA), Asn-189, Phe-293, and Glu-370 contribute to the thiamine diphosphate site. Mg(2+) is bound at residue Asn-189.

Belongs to the transketolase family. DXPS subfamily. Homodimer. Mg(2+) serves as cofactor. Requires thiamine diphosphate as cofactor.

It catalyses the reaction D-glyceraldehyde 3-phosphate + pyruvate + H(+) = 1-deoxy-D-xylulose 5-phosphate + CO2. Its pathway is metabolic intermediate biosynthesis; 1-deoxy-D-xylulose 5-phosphate biosynthesis; 1-deoxy-D-xylulose 5-phosphate from D-glyceraldehyde 3-phosphate and pyruvate: step 1/1. Its function is as follows. Catalyzes the acyloin condensation reaction between C atoms 2 and 3 of pyruvate and glyceraldehyde 3-phosphate to yield 1-deoxy-D-xylulose-5-phosphate (DXP). The chain is 1-deoxy-D-xylulose-5-phosphate synthase from Acinetobacter baumannii (strain AYE).